The sequence spans 300 residues: Putative S-adenosyl-L-methionine-dependent methyltransferase Mkms_0379 (300 aa).

S-adenosyl-L-methionine contacts are provided by residues Asp128 and 157 to 158 (DL).

Belongs to the UPF0677 family.

Exhibits S-adenosyl-L-methionine-dependent methyltransferase activity. The protein is Putative S-adenosyl-L-methionine-dependent methyltransferase Mkms_0379 of Mycobacterium sp. (strain KMS).